Consider the following 315-residue polypeptide: Homoserine kinase (315 aa).

97–107 (PPARGLGSSAT) serves as a coordination point for ATP.

This sequence belongs to the GHMP kinase family. Homoserine kinase subfamily.

It is found in the cytoplasm. The catalysed reaction is L-homoserine + ATP = O-phospho-L-homoserine + ADP + H(+). Its pathway is amino-acid biosynthesis; L-threonine biosynthesis; L-threonine from L-aspartate: step 4/5. Catalyzes the ATP-dependent phosphorylation of L-homoserine to L-homoserine phosphate. The polypeptide is Homoserine kinase (Prochlorococcus marinus (strain MIT 9515)).